A 343-amino-acid chain; its full sequence is Mediator of RNA polymerase II transcription subunit 2 (343 aa).

Disordered regions lie at residues 105-141 and 252-277; these read KQQQEEEQRRKHQAELEKNKRQQEHDAATKAAAAQQL and STNEASTNNRNNDGTGGASNPRISSN. The segment covering 107 to 132 has biased composition (basic and acidic residues); that stretch reads QQEEEQRRKHQAELEKNKRQQEHDAA. The span at 252–264 shows a compositional bias: polar residues; that stretch reads STNEASTNNRNND.

This sequence belongs to the Mediator complex subunit 2 family. In terms of assembly, component of the Mediator complex.

The protein localises to the nucleus. In terms of biological role, component of the Mediator complex, a coactivator involved in the regulated transcription of nearly all RNA polymerase II-dependent genes. Mediator functions as a bridge to convey information from gene-specific regulatory proteins to the basal RNA polymerase II transcription machinery. Mediator is recruited to promoters by direct interactions with regulatory proteins and serves as a scaffold for the assembly of a functional preinitiation complex with RNA polymerase II and the general transcription factors. The sequence is that of Mediator of RNA polymerase II transcription subunit 2 (MED2) from Eremothecium gossypii (strain ATCC 10895 / CBS 109.51 / FGSC 9923 / NRRL Y-1056) (Yeast).